We begin with the raw amino-acid sequence, 330 residues long: Small ribosomal subunit protein uS2 (330 aa).

It belongs to the universal ribosomal protein uS2 family.

This chain is Small ribosomal subunit protein uS2, found in Rhodopseudomonas palustris (strain BisA53).